Here is a 641-residue protein sequence, read N- to C-terminus: ATP-dependent zinc metalloprotease FtsH 2 (641 aa).

The Periplasmic segment spans residues 1–100 (MLAYYVSVNQ…IDVKVIHNFW (100 aa)). The helical transmembrane segment at 101 to 121 (GQAFLSVLPFLLFILALYFLF) threads the bilayer. Residues 122–641 (RQQIRMAGRG…LLPGLEGAPA (520 aa)) are Cytoplasmic-facing. Residue 193 to 200 (GPPGTGKT) participates in ATP binding. Residue His-415 coordinates Zn(2+). Glu-416 is a catalytic residue. Residues His-419 and Asp-491 each coordinate Zn(2+). The tract at residues 593–641 (KTGKMTNPPSKNSSPVSNGGEASSTKSPARQEETTKDGGLLPGLEGAPA) is disordered. 2 stretches are compositionally biased toward low complexity: residues 599–610 (NPPSKNSSPVSN) and 630–641 (GGLLPGLEGAPA).

In the central section; belongs to the AAA ATPase family. The protein in the C-terminal section; belongs to the peptidase M41 family. In terms of assembly, homohexamer. Zn(2+) serves as cofactor.

Its subcellular location is the cell inner membrane. Acts as a processive, ATP-dependent zinc metallopeptidase for both cytoplasmic and membrane proteins. Plays a role in the quality control of integral membrane proteins. The chain is ATP-dependent zinc metalloprotease FtsH 2 from Methylacidiphilum infernorum (isolate V4) (Methylokorus infernorum (strain V4)).